The following is a 298-amino-acid chain: Lipoyl synthase (298 aa).

[4Fe-4S] cluster contacts are provided by Cys-40, Cys-45, Cys-51, Cys-67, Cys-71, Cys-74, and Ser-280. The Radical SAM core domain maps to 53–269; sequence AVRRTATFMI…KEIAMQKGFS (217 aa).

The protein belongs to the radical SAM superfamily. Lipoyl synthase family. It depends on [4Fe-4S] cluster as a cofactor.

The protein resides in the cytoplasm. The catalysed reaction is [[Fe-S] cluster scaffold protein carrying a second [4Fe-4S](2+) cluster] + N(6)-octanoyl-L-lysyl-[protein] + 2 oxidized [2Fe-2S]-[ferredoxin] + 2 S-adenosyl-L-methionine + 4 H(+) = [[Fe-S] cluster scaffold protein] + N(6)-[(R)-dihydrolipoyl]-L-lysyl-[protein] + 4 Fe(3+) + 2 hydrogen sulfide + 2 5'-deoxyadenosine + 2 L-methionine + 2 reduced [2Fe-2S]-[ferredoxin]. It participates in protein modification; protein lipoylation via endogenous pathway; protein N(6)-(lipoyl)lysine from octanoyl-[acyl-carrier-protein]. Functionally, catalyzes the radical-mediated insertion of two sulfur atoms into the C-6 and C-8 positions of the octanoyl moiety bound to the lipoyl domains of lipoate-dependent enzymes, thereby converting the octanoylated domains into lipoylated derivatives. This Bacillus velezensis (strain DSM 23117 / BGSC 10A6 / LMG 26770 / FZB42) (Bacillus amyloliquefaciens subsp. plantarum) protein is Lipoyl synthase.